The sequence spans 448 residues: N-succinylarginine dihydrolase (448 aa).

Substrate-binding positions include 19 to 28 (GGLSYGNVAS), asparagine 110, and 137 to 138 (HR). Glutamate 174 is an active-site residue. Arginine 214 is a binding site for substrate. Histidine 250 is a catalytic residue. Substrate contacts are provided by aspartate 252 and asparagine 365. The active-site Nucleophile is cysteine 371.

The protein belongs to the succinylarginine dihydrolase family. In terms of assembly, homodimer.

It catalyses the reaction N(2)-succinyl-L-arginine + 2 H2O + 2 H(+) = N(2)-succinyl-L-ornithine + 2 NH4(+) + CO2. It functions in the pathway amino-acid degradation; L-arginine degradation via AST pathway; L-glutamate and succinate from L-arginine: step 2/5. Functionally, catalyzes the hydrolysis of N(2)-succinylarginine into N(2)-succinylornithine, ammonia and CO(2). The sequence is that of N-succinylarginine dihydrolase from Pseudomonas syringae pv. tomato (strain ATCC BAA-871 / DC3000).